The sequence spans 245 residues: uncharacterized protein (245 aa).

6 helical membrane passes run 38 to 58 (IYPA…AIFI), 68 to 88 (TIEL…QGYF), 100 to 120 (IWSL…LILA), 129 to 149 (VLFI…FVSA), 194 to 214 (VNNI…FLMN), and 217 to 237 (IAFI…LIIH).

The protein belongs to the acyltransferase 3 family.

The protein localises to the cell membrane. This is an uncharacterized protein from Haemophilus influenzae (strain ATCC 51907 / DSM 11121 / KW20 / Rd).